The primary structure comprises 272 residues: GEM-like protein 5 (272 aa).

A disordered region spans residues 1-42; it reads MTGSQEDQPKIIIDQEQPKTLETEHQPEPSSSSPDQKKWGTH. Residues 16-27 show a composition bias toward basic and acidic residues; sequence EQPKTLETEHQP. A GRAM domain is found at 143-221; it reads SLFRQIFGTE…ANVATVNPVV (79 aa).

Belongs to the GEM family.

This Arabidopsis thaliana (Mouse-ear cress) protein is GEM-like protein 5.